The primary structure comprises 273 residues: Glutamate racemase (273 aa).

Substrate is bound by residues 10–11 (DS) and 42–43 (YG). The Proton donor/acceptor role is filled by C73. 74–75 (NT) is a binding site for substrate. C184 functions as the Proton donor/acceptor in the catalytic mechanism. Residue 185–186 (TH) coordinates substrate.

It belongs to the aspartate/glutamate racemases family.

It catalyses the reaction L-glutamate = D-glutamate. It participates in cell wall biogenesis; peptidoglycan biosynthesis. In terms of biological role, provides the (R)-glutamate required for cell wall biosynthesis. The polypeptide is Glutamate racemase (Desulforudis audaxviator (strain MP104C)).